A 314-amino-acid chain; its full sequence is Glycerate dehydrogenase (314 aa).

Residues threonine 74, 157–158, 228–230, and aspartate 254 each bind NAD(+); these read AL and TAR. Arginine 230 is an active-site residue. Glutamate 259 is an active-site residue. The Proton donor role is filled by histidine 280. NAD(+) is bound at residue 280–283; sequence HVAW.

Belongs to the D-isomer specific 2-hydroxyacid dehydrogenase family. In terms of assembly, homodimer.

It localises to the cytoplasm. The enzyme catalyses (R)-glycerate + NAD(+) = 3-hydroxypyruvate + NADH + H(+). It functions in the pathway one-carbon metabolism; formaldehyde assimilation via serine pathway. Plays a central role in assimilation of carbon. It converts hydroxypyruvate to glycerate as a key step in the serine cycle, and may also play an important role in C2 reactions, by interconverting glyoxylate and glycolate. The protein is Glycerate dehydrogenase (hprA) of Methylorubrum extorquens (strain ATCC 14718 / DSM 1338 / JCM 2805 / NCIMB 9133 / AM1) (Methylobacterium extorquens).